The chain runs to 588 residues: Protein kinase C iota type (588 aa).

The 84-residue stretch at 18–101 (QVRVKAYYRG…SELIIHVFPC (84 aa)) folds into the PB1 domain. The segment at 133–183 (GHAFQAKRFNRRAHCAICTDRIWGLGRQGYKCINCKLLVHKKCHKLVTVEC) adopts a Phorbol-ester/DAG-type zinc-finger fold. Residues 194–213 (GRIDPGSTHPEHPDQVLGKK) form a disordered region. Positions 246–514 (FDLLRVIGRG…FADIMAHPFF (269 aa)) constitute a Protein kinase domain. Residues 252-260 (IGRGSYAKV) and Lys275 contribute to the ATP site. Asp370 acts as the Proton acceptor in catalysis. Residues Thr404 and Thr556 each carry the phosphothreonine modification. Positions 515-586 (RNVDWDLMEQ…INPLLMSAEE (72 aa)) constitute an AGC-kinase C-terminal domain.

This sequence belongs to the protein kinase superfamily. AGC Ser/Thr protein kinase family. PKC subfamily.

The catalysed reaction is L-seryl-[protein] + ATP = O-phospho-L-seryl-[protein] + ADP + H(+). The enzyme catalyses L-threonyl-[protein] + ATP = O-phospho-L-threonyl-[protein] + ADP + H(+). With respect to regulation, exhibits an elevated basal enzymatic activity and is not regulated by diacylglycerol, phosphatidylserine, phorbol esters or calcium ions. Two specific sites, Thr-404 (activation loop of the kinase domain) and Thr-556 (turn motif), need to be phosphorylated for its full activation. Calcium- and diacylglycerol-independent serine/ threonine-protein kinase that plays a general protective role against apoptotic stimuli, is involved in NF-kappa-B activation, cell survival, differentiation and polarity, and contributes to the regulation of microtubule dynamics in the early secretory pathway. Is required for the formation and maintenance of the zonula adherens during early epithelial development and plays a critical role in organ morphogenesis and in regulating the orientation of cell division. Required for polarized epithelial organization, myocardium coherence and cell connectivity in the early somite stages. Required for heart cone tilt and development of circulatory architecture during embryogenesis. The sequence is that of Protein kinase C iota type (prkci) from Danio rerio (Zebrafish).